The sequence spans 191 residues: Chorion class B protein Ld10 (191 aa).

The signal sequence occupies residues 1–21; the sequence is MSAKIILVFCAQALFVQSALS.

This sequence belongs to the chorion protein family.

This protein is one of many from the eggshell of the gypsy moth. In Lymantria dispar (Gypsy moth), this protein is Chorion class B protein Ld10.